The sequence spans 547 residues: Myrosinase 2 (547 aa).

A signal peptide spans 1–28; it reads MQHNTYIYILTMKLLGFALAILLVVATC. 3 disulfides stabilise this stretch: C36–C460, C44–C456, and C236–C244. Residues Q69, H171, and 216-217 contribute to the a beta-D-glucoside site; that span reads NQ. N340 carries N-linked (GlcNAc...) asparagine glycosylation. A beta-D-glucoside is bound at residue Y359. Residue N384 is glycosylated (N-linked (GlcNAc...) asparagine). Residues E430, W479, 486–487, and F495 each bind a beta-D-glucoside; that span reads EF. Residue E430 is the Nucleophile of the active site. N504 is a glycosylation site (N-linked (GlcNAc...) asparagine).

This sequence belongs to the glycosyl hydrolase 1 family. As to quaternary structure, interacts with MVP1. As to expression, expressed in phloem-associated cells.

The catalysed reaction is a thioglucoside + H2O = a sugar + a thiol.. Functionally, may degrade glucosinolates (glucose residue linked by a thioglucoside bound to an amino acid derivative) to glucose, sulfate and any of the products: thiocyanates, isothiocyanates, nitriles, epithionitriles or oxazolidine-2-thiones. These toxic degradation products can deter insect herbivores. Seems to function in abscisic acid (ABA) and methyl jasmonate (MeJA) signaling in guard cells. Functionally redundant with TGG1. This chain is Myrosinase 2, found in Arabidopsis thaliana (Mouse-ear cress).